The sequence spans 604 residues: Numb-like protein (604 aa).

Disordered stretches follow at residues 1 to 68 (MSRS…QWQA), 223 to 283 (GSFR…PVAA), 372 to 457 (ASAG…TLQP), and 531 to 604 (KAGA…EIEL). The 152-residue stretch at 74-225 (RKGTCSFPVR…RTSFAREGSF (152 aa)) folds into the PID domain. Residues Ser-224 and Ser-228 each carry the phosphoserine modification. Positions 233–245 (PAEREAGDKKKAE) are enriched in basic and acidic residues. Low complexity predominate over residues 246 to 260 (AAAAPAVAPGPAQPG). The residue at position 263 (Ser-263) is a Phosphoserine. A Phosphothreonine modification is found at Thr-279. The segment covering 409-418 (TPSEAERWLE) has biased composition (basic and acidic residues). The residue at position 411 (Ser-411) is a Phosphoserine. Composition is skewed to low complexity over residues 427–441 (QQQQQQQQQQQQQQQ) and 542–552 (SAPGGQARPRP). The span at 553–568 (NGAPWPPEPAPAPAPE) shows a compositional bias: pro residues.

Interacts (via PTB domain) with MAP3K7IP2 (via C-terminal). Interacts (via C-terminal) with TRAF6 (via TRAF domains). Associates with EPS15 and NOTCH1. In terms of tissue distribution, preferentially expressed in the nervous system. In the developing neocortex, expressed in postmitotic neurons in the cortical plate but not in progenitors within the ventricular zone.

It is found in the cytoplasm. Its function is as follows. Plays a role in the process of neurogenesis. Required throughout embryonic neurogenesis to maintain neural progenitor cells, also called radial glial cells (RGCs), by allowing their daughter cells to choose progenitor over neuronal cell fate. Not required for the proliferation of neural progenitor cells before the onset of embryonic neurogenesis. Also required postnatally in the subventricular zone (SVZ) neurogenesis by regulating SVZ neuroblasts survival and ependymal wall integrity. Negative regulator of NF-kappa-B signaling pathway. The inhibition of NF-kappa-B activation is mediated at least in part, by preventing MAP3K7IP2 to interact with polyubiquitin chains of TRAF6 and RIPK1 and by stimulating the 'Lys-48'-linked polyubiquitination and degradation of TRAF6 in cortical neurons. This Mus musculus (Mouse) protein is Numb-like protein (Numbl).